A 154-amino-acid polypeptide reads, in one-letter code: Pseudo histidine-containing phosphotransfer protein 6 (154 aa).

Position 1 is an N-acetylmethionine (methionine 1). Positions 41–137 (SPNFVYDVIN…HYLKNMMHEL (97 aa)) constitute an HPt domain.

In terms of assembly, interacts with AHK5.

Its subcellular location is the cytoplasm. The protein localises to the cytosol. It is found in the nucleus. Its function is as follows. Functions as a two-component phosphorelay mediator between cytokinin sensor histidine kinases and response regulators (B-type ARRs). Plays an important role in propagating cytokinin signal transduction. This chain is Pseudo histidine-containing phosphotransfer protein 6 (AHP6), found in Arabidopsis thaliana (Mouse-ear cress).